The sequence spans 255 residues: uncharacterized protein (255 aa).

The 69-residue stretch at 4-72 (DPYSVLGVEK…KRRKHYDKTG (69 aa)) folds into the J domain. 2 stretches are compositionally biased toward basic residues: residues 167–178 (FAPNEKKRKRRA) and 243–255 (TKPK…RSKE). 2 disordered regions span residues 167–215 (FAPN…EEAL) and 230–255 (LISN…RSKE).

This sequence belongs to the DnaJ family.

It localises to the nucleus. It is found in the nucleolus. This is an uncharacterized protein from Schizosaccharomyces pombe (strain 972 / ATCC 24843) (Fission yeast).